The following is a 171-amino-acid chain: Odorant-binding protein 1b (171 aa).

Positions 1–19 (MMVKFLLLALVFGLAHVHA) are cleaved as a signal peptide. 2 disulfides stabilise this stretch: C57/C61 and C76/C169.

It belongs to the calycin superfamily. Lipocalin family. As to quaternary structure, may form a heterodimer with OBP1A. The N-terminus may be blocked. Expressed in nasal mucosa (at protein level). Specifically detected in septal and lateral nasal glands.

Its subcellular location is the secreted. Binds the chemical odorant 2-isobutyl-3-methoxypyrazine. In Mus musculus (Mouse), this protein is Odorant-binding protein 1b.